We begin with the raw amino-acid sequence, 776 residues long: Microtubule-associated protein tau (776 aa).

The segment covering 1 to 26 (MAEPRQEFEVMEDHAGTYGLGDRKDQ) has biased composition (basic and acidic residues). The tract at residues 1 to 591 (MAEPRQEFEV…PVPMPDLKNV (591 aa)) is disordered. Ala2 is subject to N-acetylalanine. 2 positions are modified to phosphotyrosine: Tyr18 and Tyr29. Lys44 participates in a covalent cross-link: Glycyl lysine isopeptide (Lys-Gly) (interchain with G-Cter in ubiquitin). Phosphoserine is present on residues Ser46 and Ser61. Positions 61 to 71 (SETSDAKSTPT) are enriched in polar residues. Phosphothreonine occurs at positions 69, 71, and 111. Basic and acidic residues-rich tracts occupy residues 179–189 (EGGRHAPELLK) and 207–216 (GGKERPGSKE). Ser214 carries the phosphoserine modification. Acidic residues predominate over residues 217 to 228 (EVDEDRDVDESS). 2 stretches are compositionally biased toward basic and acidic residues: residues 293-303 (KGQDAHLEFTF) and 314-323 (EQAHSEEHLG). Residues 324–340 (RAAFPGAPGEGPEARGP) show a composition bias toward low complexity. Basic and acidic residues-rich tracts occupy residues 344–356 (EDTK…EPSE) and 381–393 (KSKD…DKKA). Residues 440–452 (KYVSSVTPRTGSS) show a composition bias toward polar residues. Residues 455–466 (KEMKLKGADGKT) are compositionally biased toward basic and acidic residues. Thr470 is modified (phosphothreonine). At Arg472 the chain carries Omega-N-methylarginine. At Lys480 the chain carries N6,N6-dimethyllysine; alternate. Lys480 carries the post-translational modification N6-acetyllysine; alternate. Phosphothreonine is present on residues Thr486, Thr492, and Thr498. 3 positions are modified to phosphoserine: Ser502, Ser526, and Ser530. The span at 517–528 (RSERGEPPKSGD) shows a compositional bias: basic and acidic residues. Positions 529 to 549 (RSGYSSPGSPGTPGSRSRTPS) are enriched in low complexity. Position 532 is a phosphotyrosine (Tyr532). Phosphoserine is present on residues Ser533, Ser534, and Ser537. Residues Thr540 and Thr547 each carry the phosphothreonine modification. A Phosphoserine modification is found at Ser549. Thr552 is modified (phosphothreonine). Position 560 is an N6-acetyllysine (Lys560). Thr566 carries the post-translational modification Phosphothreonine. A phosphoserine mark is found at Ser570 and Ser572. Tau/MAP repeat units follow at residues 579 to 609 (QTAP…GGGK), 610 to 640 (VQII…GGGS), 641 to 671 (VQIV…GGGQ), and 672 to 703 (VEVK…GGGN). Lys589 is covalently cross-linked (Glycyl lysine isopeptide (Lys-Gly) (interchain with G-Cter in ubiquitin)). N6-acetyllysine; alternate is present on Lys594. Lys594 is modified (N6-methyllysine; alternate). Lys594 is covalently cross-linked (Glycyl lysine isopeptide (Lys-Gly) (interchain with G-Cter in ubiquitin); alternate). A Phosphoserine modification is found at Ser597. A Glycyl lysine isopeptide (Lys-Gly) (interchain with G-Cter in ubiquitin) cross-link involves residue Lys602. Position 616 is an N6-acetyllysine; alternate (Lys616). Lys616 is covalently cross-linked (Glycyl lysine isopeptide (Lys-Gly) (interchain with G-Cter in ubiquitin); alternate). Phosphoserine is present on residues Ser620 and Ser624. Lys625 is modified (N6-acetyllysine). Position 628 is a phosphoserine (Ser628). Lys633 carries the post-translational modification N6-acetyllysine; alternate. A Glycyl lysine isopeptide (Lys-Gly) (interchain with G-Cter in ubiquitin); alternate cross-link involves residue Lys633. At Ser640 the chain carries Phosphoserine. Lys646 bears the N6,N6-dimethyllysine; alternate mark. Residues Lys646, Lys652, and Lys656 each carry the N6-acetyllysine; alternate modification. Residues Lys646, Lys652, and Lys656 each participate in a glycyl lysine isopeptide (Lys-Gly) (interchain with G-Cter in ubiquitin); alternate cross-link. Ser659 carries the phosphoserine modification. N6-acetyllysine; alternate is present on residues Lys666, Lys678, and Lys682. Glycyl lysine isopeptide (Lys-Gly) (interchain with G-Cter in ubiquitin); alternate cross-links involve residues Lys666, Lys678, and Lys682. Arg684 bears the Omega-N-methylarginine mark. Ser687 carries the phosphoserine modification. Lys688 participates in a covalent cross-link: Glycyl lysine isopeptide (Lys-Gly) (interchain with G-Cter in ubiquitin). At Ser691 the chain carries Phosphoserine. N6-acetyllysine; alternate is present on Lys704. A Glycyl lysine isopeptide (Lys-Gly) (interchain with G-Cter in ubiquitin); alternate cross-link involves residue Lys704. Lys710 is covalently cross-linked (Glycyl lysine isopeptide (Lys-Gly) (interchain with G-Cter in ubiquitin)). Residue Lys720 is modified to N6-acetyllysine; alternate. Lys720 participates in a covalent cross-link: Glycyl lysine isopeptide (Lys-Gly) (interchain with G-Cter in ubiquitin); alternate. At Tyr729 the chain carries Phosphotyrosine. Residues Ser731 and Ser735 each carry the phosphoserine modification. Positions 733 to 752 (VVSGDTSPRHLSNVSSTGSI) are disordered. Residues 736-751 (GDTSPRHLSNVSSTGS) are compositionally biased toward polar residues. Phosphothreonine is present on Thr738. Phosphoserine occurs at positions 739, 744, 751, and 757. Thr762 carries the post-translational modification Phosphothreonine.

In terms of assembly, interacts with MARK1, MARK2, MARK3 and MARK4. Interacts with SQSTM1 when polyubiquitinated. Interacts with PSMC2 through SQSTM1. Interacts with FKBP4. Binds to CSNK1D. Interacts with SGK1. Interacts with EPM2A; the interaction dephosphorylates MAPT at Ser-396. Interacts with PIN1. Interacts with LRRK2. Interacts with LRP1, leading to endocytosis; this interaction is reduced in the presence of LRPAP1/RAP. Post-translationally, polyubiquitinated. Requires functional TRAF6 and may provoke SQSTM1-dependent degradation by the proteasome. In terms of processing, phosphorylation at various serine and threonine residues in S-P or T-P motifs by proline-directed protein kinases (PDPK1, CDK1, CDK5, GSK3, MAPK) (a few sites per protein in interphase, more in mitosis), and at serine residues in K-X-G-S motifs by MAP/microtubule affinity-regulating kinase (MARK1, MARK2, MARK3 or MARK4), causing detachment from microtubules, and their disassembly. Phosphorylation at Ser-597 by BRSK1 and BRSK2 in neurons affects ability to bind microtubules and plays a role in neuron polarization. Phosphorylated by PHK. Dephosphorylation at several serine and threonine residues by the serine/threonine phosphatase PPP5C. Phosphorylation at Ser-214 by SGK1 mediates microtubule depolymerization and neurite formation in hippocampal neurons.

The protein resides in the cytoplasm. It is found in the cytosol. The protein localises to the cell membrane. It localises to the cytoskeleton. Its subcellular location is the cell projection. The protein resides in the axon. It is found in the dendrite. In terms of biological role, promotes microtubule assembly and stability, and might be involved in the establishment and maintenance of neuronal polarity. The C-terminus binds axonal microtubules while the N-terminus binds neural plasma membrane components, suggesting that tau functions as a linker protein between both. Axonal polarity is predetermined by tau localization (in the neuronal cell) in the domain of the cell body defined by the centrosome. The short isoforms allow plasticity of the cytoskeleton whereas the longer isoforms may preferentially play a role in its stabilization. This chain is Microtubule-associated protein tau (MAPT), found in Pan troglodytes (Chimpanzee).